A 104-amino-acid polypeptide reads, in one-letter code: Integration host factor subunit alpha (104 aa).

A disordered region spans residues 51 to 70 (GNFQLRDKPQRPGRNPKTGE).

It belongs to the bacterial histone-like protein family. As to quaternary structure, heterodimer of an alpha and a beta chain.

Its function is as follows. This protein is one of the two subunits of integration host factor, a specific DNA-binding protein that functions in genetic recombination as well as in transcriptional and translational control. The protein is Integration host factor subunit alpha of Ralstonia nicotianae (strain ATCC BAA-1114 / GMI1000) (Ralstonia solanacearum).